A 171-amino-acid chain; its full sequence is MTGIGEQSIAEQVRSLLEPVLERDGYELVEVEWARLAGRWTLRVFIDKAGGVGIDDCQAVSKTVEPILDVADFIEPAYDLEVSSPGLDRPLRKPRDFDRYAGQRVHVKAYGPVAGTAPGSPARKHWTGVLKGFRDGAVELDVDGALHRVPHDQIAKANLEYDVEGDLRRKD.

This sequence belongs to the RimP family.

Its subcellular location is the cytoplasm. In terms of biological role, required for maturation of 30S ribosomal subunits. This Anaeromyxobacter dehalogenans (strain 2CP-C) protein is Ribosome maturation factor RimP.